A 675-amino-acid chain; its full sequence is MAQVAKKILVTCALPYANGSIHLGHMLEHIQADIWVRFQRMRGNQVHFICADDAHGTPIMLKAQQMGIEPEQMIAEMSQEHQQDFAGFAISYDNYHSTHSDENRELSSLIYGRLKANGYIKNRTISQLYDPEKGMFLPDRFVKGTCPKCKAPEQYGDNCEVCGATYSPTELIDPKSAVSGATPVMRESEHFFFDLPAFSDMLQAWTRSGALQEQVANKMQEWFDSGLQQWDITRDAPYFGFEVPDAPGKYFYVWLDAPIGYMGAFKNLCDKRGDLDFDEFWGKDAKTDLYHFIGKDIVYFHSLFWPAMLEGSNFRKPTNLFVHGYVTVNGAKMSKSRGTFIKAGTYLKYLDADCLRYYYAAKLSSRIDDIDLNLEDFVQRVNADIVNKVVNLASRNAGFINKRFAGQLADQLADPVLYKTFTDAATSIADAYNNRESGKAIREIMALADVANRYVDEQAPWVVAKQEGRDADLHAICSMGINLFRVLMTYLKPVLPSLTERTEAFLNTELTWDSIEQPLLGHSITAFKALFNRIDLDKVNEMVASSKEDMAPATRVTGPLADDPIQETISFDDFAKVDMRIALIQQAEFVEGSDKLLKLTLELGGETRQVFSGIRSAYPDPKALEGRMTVMVANLAPRKMRFGVSEGMVMAAGPGGSDIFLLSPDSGAQPGMQVK.

A 'HIGH' region motif is present at residues 15-25; that stretch reads PYANGSIHLGH. Residues C146, C149, C159, and C162 each contribute to the Zn(2+) site. Positions 332 to 336 match the 'KMSKS' region motif; the sequence is KMSKS. Residue K335 coordinates ATP. One can recognise a tRNA-binding domain in the interval 573–675; sequence DFAKVDMRIA…SGAQPGMQVK (103 aa).

It belongs to the class-I aminoacyl-tRNA synthetase family. MetG type 1 subfamily. In terms of assembly, homodimer. Requires Zn(2+) as cofactor.

It localises to the cytoplasm. The catalysed reaction is tRNA(Met) + L-methionine + ATP = L-methionyl-tRNA(Met) + AMP + diphosphate. Is required not only for elongation of protein synthesis but also for the initiation of all mRNA translation through initiator tRNA(fMet) aminoacylation. In Yersinia pseudotuberculosis serotype O:1b (strain IP 31758), this protein is Methionine--tRNA ligase.